A 336-amino-acid chain; its full sequence is Dihydroorotate dehydrogenase (quinone) (336 aa).

FMN contacts are provided by residues 62–66 and threonine 86; that span reads AGLDK. Lysine 66 serves as a coordination point for substrate. 111-115 contacts substrate; sequence NRMGF. Asparagine 139 and asparagine 172 together coordinate FMN. Asparagine 172 contributes to the substrate binding site. Serine 175 functions as the Nucleophile in the catalytic mechanism. Substrate is bound at residue asparagine 177. The FMN site is built by lysine 217 and threonine 245. 246-247 serves as a coordination point for substrate; sequence NT. FMN is bound by residues glycine 268, glycine 297, and 318 to 319; that span reads YS.

It belongs to the dihydroorotate dehydrogenase family. Type 2 subfamily. In terms of assembly, monomer. The cofactor is FMN.

It localises to the cell membrane. The enzyme catalyses (S)-dihydroorotate + a quinone = orotate + a quinol. Its pathway is pyrimidine metabolism; UMP biosynthesis via de novo pathway; orotate from (S)-dihydroorotate (quinone route): step 1/1. Catalyzes the conversion of dihydroorotate to orotate with quinone as electron acceptor. The polypeptide is Dihydroorotate dehydrogenase (quinone) (Enterobacter sp. (strain 638)).